The sequence spans 340 residues: MKMTLKELGEMLGARVQGNELLTISSVGTLESAQTDQLSFLANSKYRSQLESTQAGAVLLSEKEANNFQGNALIVKDPYVAFARVAQRLDTTPKAAVGIHPSAQIDASAQIGQGAAIGANAVIGAGVIIGEHCQIGPGCVIGEHSILGSNTRLWANVTLYHDVHLGQNCIIHSGAVLGSDGFGYANERGTWVKIPQTGGVRIGDNVEIGANTAVDRGALGHTEIGDGVILDNQVQIAHNAIIGKHTAIAGGSIIAGSTKLGQYCIVGGNSAIAGHLKIADGVHVSGGTNVTSEIREPGTYSSATVAVENKLWRRNTVRFRQLDDLFNRVKLLEKQQKTQD.

The active-site Proton acceptor is H238.

It belongs to the transferase hexapeptide repeat family. LpxD subfamily. In terms of assembly, homotrimer.

The enzyme catalyses a UDP-3-O-[(3R)-3-hydroxyacyl]-alpha-D-glucosamine + a (3R)-hydroxyacyl-[ACP] = a UDP-2-N,3-O-bis[(3R)-3-hydroxyacyl]-alpha-D-glucosamine + holo-[ACP] + H(+). It participates in bacterial outer membrane biogenesis; LPS lipid A biosynthesis. Functionally, catalyzes the N-acylation of UDP-3-O-acylglucosamine using 3-hydroxyacyl-ACP as the acyl donor. Is involved in the biosynthesis of lipid A, a phosphorylated glycolipid that anchors the lipopolysaccharide to the outer membrane of the cell. The polypeptide is UDP-3-O-acylglucosamine N-acyltransferase (Shewanella denitrificans (strain OS217 / ATCC BAA-1090 / DSM 15013)).